Reading from the N-terminus, the 320-residue chain is ATP-dependent 6-phosphofructokinase (320 aa).

G12 is an ATP binding site. 22-26 (RGVVR) contacts ADP. Residues 73–74 (RF) and 103–106 (GDGS) contribute to the ATP site. D104 contributes to the Mg(2+) binding site. 126 to 128 (TID) is a substrate binding site. D128 (proton acceptor) is an active-site residue. R155 serves as a coordination point for ADP. Substrate is bound by residues R163 and 170-172 (MGR). ADP contacts are provided by residues 186-188 (GCE), K212, and 214-216 (KKH). Substrate contacts are provided by residues E223, R244, and 250–253 (HIQR).

The protein belongs to the phosphofructokinase type A (PFKA) family. ATP-dependent PFK group I subfamily. Prokaryotic clade 'B1' sub-subfamily. As to quaternary structure, homotetramer. Requires Mg(2+) as cofactor.

It is found in the cytoplasm. It carries out the reaction beta-D-fructose 6-phosphate + ATP = beta-D-fructose 1,6-bisphosphate + ADP + H(+). It participates in carbohydrate degradation; glycolysis; D-glyceraldehyde 3-phosphate and glycerone phosphate from D-glucose: step 3/4. With respect to regulation, allosterically activated by ADP and other diphosphonucleosides, and allosterically inhibited by phosphoenolpyruvate. Catalyzes the phosphorylation of D-fructose 6-phosphate to fructose 1,6-bisphosphate by ATP, the first committing step of glycolysis. The polypeptide is ATP-dependent 6-phosphofructokinase (Vibrio parahaemolyticus serotype O3:K6 (strain RIMD 2210633)).